Here is a 262-residue protein sequence, read N- to C-terminus: Acyl-[acyl-carrier-protein]--UDP-N-acetylglucosamine O-acyltransferase (262 aa).

Belongs to the transferase hexapeptide repeat family. LpxA subfamily. As to quaternary structure, homotrimer.

The protein resides in the cytoplasm. It carries out the reaction a (3R)-hydroxyacyl-[ACP] + UDP-N-acetyl-alpha-D-glucosamine = a UDP-3-O-[(3R)-3-hydroxyacyl]-N-acetyl-alpha-D-glucosamine + holo-[ACP]. It functions in the pathway glycolipid biosynthesis; lipid IV(A) biosynthesis; lipid IV(A) from (3R)-3-hydroxytetradecanoyl-[acyl-carrier-protein] and UDP-N-acetyl-alpha-D-glucosamine: step 1/6. Involved in the biosynthesis of lipid A, a phosphorylated glycolipid that anchors the lipopolysaccharide to the outer membrane of the cell. The polypeptide is Acyl-[acyl-carrier-protein]--UDP-N-acetylglucosamine O-acyltransferase (Pectobacterium atrosepticum (strain SCRI 1043 / ATCC BAA-672) (Erwinia carotovora subsp. atroseptica)).